A 427-amino-acid polypeptide reads, in one-letter code: Glutamate-1-semialdehyde 2,1-aminomutase 1 (427 aa).

Lysine 267 is subject to N6-(pyridoxal phosphate)lysine.

It belongs to the class-III pyridoxal-phosphate-dependent aminotransferase family. HemL subfamily. In terms of assembly, homodimer. Pyridoxal 5'-phosphate is required as a cofactor.

Its subcellular location is the cytoplasm. It catalyses the reaction (S)-4-amino-5-oxopentanoate = 5-aminolevulinate. It functions in the pathway porphyrin-containing compound metabolism; protoporphyrin-IX biosynthesis; 5-aminolevulinate from L-glutamyl-tRNA(Glu): step 2/2. In Macrococcus caseolyticus (strain JCSC5402) (Macrococcoides caseolyticum), this protein is Glutamate-1-semialdehyde 2,1-aminomutase 1.